We begin with the raw amino-acid sequence, 523 residues long: La-related protein 1C (523 aa).

The span at 1-16 (MASATSNNPASSSMSP) shows a compositional bias: low complexity. Disordered regions lie at residues 1–52 (MASA…VRGE) and 95–313 (AAGD…VRHP). Residue Ala2 is modified to N-acetylalanine. The span at 22-31 (NHGSPTASVA) shows a compositional bias: polar residues. 2 stretches are compositionally biased toward low complexity: residues 32-44 (QSPRRPSRQVSSP) and 146-169 (SNKSSSDSLKSLGDVPSSSSASSS). Phosphoserine is present on Ser33. 2 stretches are compositionally biased toward polar residues: residues 206-270 (QRNG…NGNH) and 282-305 (HGNQNWTFQRSFNGREGNAQSQRG). Residues 363–452 (HYQDPPLHMK…RDNWQNWVLR (90 aa)) form the HTH La-type RNA-binding domain. The tract at residues 474–523 (GNLSVDQSSADPIGGSSSQLQPTEALSDDQQQSSSTAPVSNHNAPDGANR) is disordered. Residues 477-516 (SVDQSSADPIGGSSSQLQPTEALSDDQQQSSSTAPVSNHN) show a composition bias toward polar residues.

This sequence belongs to the LARP family. As to expression, age-dependent accumulation in rosette leaves.

The protein resides in the cytoplasm. Functionally, promotes leaf senescence mediated by abscisic acid (ABA), salicylic acid (SA) and jasmonic acid (MeJA), probably though the induction of expression of senescence-associated genes (SAGs) and defense-related genes. This Arabidopsis thaliana (Mouse-ear cress) protein is La-related protein 1C (LARP1C).